The chain runs to 154 residues: NADPH-dependent 7-cyano-7-deazaguanine reductase (154 aa).

Polar residues predominate over residues 1 to 21; it reads MPNTDVSSLSMLGQQTETAQS. Residues 1–28 form a disordered region; the sequence is MPNTDVSSLSMLGQQTETAQSPEEAVLE. The Thioimide intermediate role is filled by Cys52. Residue Asp59 is the Proton donor of the active site. Residues 74 to 76 and 93 to 94 contribute to the substrate site; these read VES and HE.

It belongs to the GTP cyclohydrolase I family. QueF type 1 subfamily.

Its subcellular location is the cytoplasm. It carries out the reaction 7-aminomethyl-7-carbaguanine + 2 NADP(+) = 7-cyano-7-deazaguanine + 2 NADPH + 3 H(+). It participates in tRNA modification; tRNA-queuosine biosynthesis. Catalyzes the NADPH-dependent reduction of 7-cyano-7-deazaguanine (preQ0) to 7-aminomethyl-7-deazaguanine (preQ1). The sequence is that of NADPH-dependent 7-cyano-7-deazaguanine reductase from Rhizobium johnstonii (strain DSM 114642 / LMG 32736 / 3841) (Rhizobium leguminosarum bv. viciae).